A 188-amino-acid polypeptide reads, in one-letter code: NADH-quinone oxidoreductase subunit I (188 aa).

4Fe-4S ferredoxin-type domains are found at residues 44-74 and 90-119; these read LNRYADGLEKCIGCELCAWACPADAIFVEGA and RVYQINYLRCIGCGLCIEACPTRALTMTNE. The [4Fe-4S] cluster site is built by Cys54, Cys57, Cys60, Cys64, Cys99, Cys102, Cys105, and Cys109. Positions 144 to 188 are disordered; the sequence is GMVDSPHPMAPGTTAEDYYRGTVTGGAAPASQDEPEADDTAGDRP. Acidic residues predominate over residues 176-188; sequence DEPEADDTAGDRP.

The protein belongs to the complex I 23 kDa subunit family. In terms of assembly, NDH-1 is composed of 14 different subunits. Subunits NuoA, H, J, K, L, M, N constitute the membrane sector of the complex. [4Fe-4S] cluster serves as cofactor.

It localises to the cell membrane. The catalysed reaction is a quinone + NADH + 5 H(+)(in) = a quinol + NAD(+) + 4 H(+)(out). NDH-1 shuttles electrons from NADH, via FMN and iron-sulfur (Fe-S) centers, to quinones in the respiratory chain. The immediate electron acceptor for the enzyme in this species is believed to be ubiquinone. Couples the redox reaction to proton translocation (for every two electrons transferred, four hydrogen ions are translocated across the cytoplasmic membrane), and thus conserves the redox energy in a proton gradient. The protein is NADH-quinone oxidoreductase subunit I of Rhodococcus opacus (strain B4).